The chain runs to 1202 residues: Metabotropic glycine receptor (1202 aa).

A signal peptide spans 1 to 24 (MGAMAYSLLLCLLLAHLGLGEVGA). A disordered region spans residues 25–62 (SLDPSERPDSSRERTSRGKQHGQQLPRASAPDPSIPWS). Topologically, residues 25-417 (SLDPSERPDS…CFVQEDKYLR (393 aa)) are extracellular. A compositionally biased stretch (basic and acidic residues) spans 28-40 (PSERPDSSRERTS). The segment at 85 to 281 (YLYTGDFHQL…CENGSYKPGW (197 aa)) is cache-like region. N-linked (GlcNAc...) asparagine glycans are attached at residues N98 and N143. Cysteines 99 and 272 form a disulfide. Residues S172 and R173 each coordinate glycine. A glycan (N-linked (GlcNAc...) asparagine) is linked at N215. The segment at 234-253 (LHRRGSNQGPRGLGHSWRRR) is disordered. Position 271 (E271) interacts with glycine. N274 carries N-linked (GlcNAc...) asparagine glycosylation. D307 is a glycine binding site. N-linked (GlcNAc...) asparagine glycosylation occurs at N333. The helical transmembrane segment at 418-439 (LAIISFQALCMLLDFVSMLVVY) threads the bilayer. Over 440–451 (HFRKAKSIRASG) the chain is Cytoplasmic. Residues 452 to 474 (LILLETILFGSLLLYFPVVILYF) traverse the membrane as a helical segment. At 475–478 (EPST) the chain is on the extracellular side. Residues 479-501 (FRCILLRWVRLLGFATVYGTVTL) traverse the membrane as a helical segment. Residues C481 and C573 are joined by a disulfide bond. Topologically, residues 502–525 (KLHRVLKVFLSRTAQRIPYMTGGR) are cytoplasmic. The chain crosses the membrane as a helical span at residues 526 to 547 (VMRMLAVIVLVVFWFLVGWTSS). Topologically, residues 548 to 576 (MCQNLERDILLVGQGQTSDNLTFNMCLID) are extracellular. The chain crosses the membrane as a helical span at residues 577–597 (RWDYMTAVAEFLFLLWGIYLC). The Cytoplasmic portion of the chain corresponds to 598–611 (YAVRTVPSAFHEPR). The chain crosses the membrane as a helical span at residues 612–633 (YMAVAVHNELIITAIFHTIRFV). The Extracellular portion of the chain corresponds to 634-642 (LASRLQPDW). The chain crosses the membrane as a helical span at residues 643 to 664 (MLMLYFAHTHLTVTVTIGLLLI). Over 665-1202 (PKFSHSSNNP…SASKIPGPRK (538 aa)) the chain is Cytoplasmic. 3 positions are modified to phosphoserine: S694, S705, and S708. Disordered stretches follow at residues 757-899 (RITE…TSML) and 914-995 (LGLA…QIKD). Composition is skewed to basic and acidic residues over residues 769 to 781 (CSKE…DHSA) and 819 to 828 (STYDHVRDQT). K774 is covalently cross-linked (Glycyl lysine isopeptide (Lys-Gly) (interchain with G-Cter in ubiquitin)). Residues 845-856 (ENSTLESLSSKK) are compositionally biased toward low complexity. Position 865 is a phosphoserine (S865). Residues 925-943 (MEDRAKSQKPQPKDRETNR) are compositionally biased toward basic and acidic residues. 2 stretches are compositionally biased toward polar residues: residues 944 to 958 (KYSN…PNSN) and 975 to 994 (QRVN…TQIK). S946 is subject to Phosphoserine. Positions 1002 to 1006 (VCPWE) match the VCPWE motif 1 motif. S1061 bears the Phosphoserine mark. Positions 1067-1071 (VCPWE) match the VCPWE motif 2 motif. S1076 is subject to Phosphoserine. 2 stretches are compositionally biased toward polar residues: residues 1132–1144 (QMGD…SSSV) and 1151–1162 (CISSNNSPQPLT). The interval 1132–1162 (QMGDQEKQTSSSVDIIPGSCISSNNSPQPLT) is disordered. The VCPWE motif 3 motif lies at 1167–1171 (VCPWE).

Belongs to the G-protein coupled receptor 3 family. As to quaternary structure, homodimer. Associates with the RGS7-GNB5 complex, promoting its localization to the cell membrane and regulating its GTPase activator activity. Interacts (via VCPWE motifs) with GNAO1. Interacts with GPC4. Interacts with EGFLAM.

It is found in the cell membrane. It localises to the postsynaptic cell membrane. The protein resides in the presynaptic cell membrane. The protein localises to the nucleus. Functionally, metabotropic receptor for glycine that controls synapse formation and function in the brain. Acts as an atypical G-protein coupled receptor that recruits and regulates the RGS7-GNB5 complex instead of activating G proteins. In absence of glycine ligand, promotes the GTPase activator activity of RGS7, increasing the GTPase activity of G protein alpha subunits, thereby driving them into their inactive GDP-bound form. Glycine-binding changes the conformation of the intracellular surface, inhibiting the GTPase activator activity of the RGS7-GNB5 complex, promoting G protein alpha subunits into their active GTP-bound form and regulating cAMP levels. Also able to bind taurine, a compound closely related to glycine, but with a two-fold lower affinity. Glycine receptor-dependent regulation of cAMP controls key ion channels, kinases and neurotrophic factors involved in neuronal excitability and synaptic transmission. Plays a pivotal role in regulating mood and cognition via its ability to regulate neuronal excitability in L2/L3 pyramidal neurons of the prefrontal cortex. Also involved in spatial learning by regulating hippocampal CA1 neuronal excitability. Acts as a synaptic organizer in the hippocampus, required for proper mossy fiber-CA3 neurocircuitry establishment, structure and function: induces presynaptic differentiation in contacting axons via its interaction with GPC4. In addition to glycine, may also act as a receptor for osteocalcin (BGLAP) hormone: osteocalcin-binding initiates a signaling response that prevents neuronal apoptosis in the hippocampus and regulates the synthesis of neurotransmitters. In Rattus norvegicus (Rat), this protein is Metabotropic glycine receptor.